An 84-amino-acid chain; its full sequence is U4-theraphotoxin-Hhn1a (84 aa).

The first 22 residues, 1 to 22, serve as a signal peptide directing secretion; the sequence is MKVTLIAILTRAAVLVLHTTAA. The propeptide occupies 23-47; that stretch reads EELEESQLMEVSMPDTELAAVDEER. 3 cysteine pairs are disulfide-bonded: Cys51–Cys65, Cys55–Cys76, and Cys70–Cys81.

It belongs to the neurotoxin 12 (Hwtx-2) family. 02 (Hwtx-2) subfamily. Expressed by the venom gland.

The protein localises to the secreted. Functionally, postsynaptic neurotoxin. This is U4-theraphotoxin-Hhn1a from Cyriopagopus hainanus (Chinese bird spider).